We begin with the raw amino-acid sequence, 365 residues long: Heat-inducible transcription repressor HrcA (365 aa).

It belongs to the HrcA family.

Functionally, negative regulator of class I heat shock genes (grpE-dnaK-dnaJ and groELS operons). Prevents heat-shock induction of these operons. This is Heat-inducible transcription repressor HrcA from Nodularia spumigena.